A 412-amino-acid polypeptide reads, in one-letter code: Protein trichome birefringence-like 13 (412 aa).

A helical; Signal-anchor for type II membrane protein transmembrane segment spans residues 9–29; the sequence is PSLFPLLSLLCFISIFLLLSL. The GDS motif signature appears at 137 to 139; sequence GDS. A DCXHWCLPGXXDXWN motif motif is present at residues 385–399; it reads DCMHWCLPGLTDTWN.

Belongs to the PC-esterase family. TBL subfamily.

It is found in the membrane. Its function is as follows. May act as a bridging protein that binds pectin and other cell wall polysaccharides. Probably involved in maintaining esterification of pectins. May be involved in the specific O-acetylation of cell wall polymers. The polypeptide is Protein trichome birefringence-like 13 (TBL13) (Arabidopsis thaliana (Mouse-ear cress)).